The chain runs to 142 residues: Small ribosomal subunit protein bS6 (142 aa).

The interval 110–142 (NKKPSHAKEKHEKTEHAHSHHAEEAKSTESHSE) is disordered.

Belongs to the bacterial ribosomal protein bS6 family.

Its function is as follows. Binds together with bS18 to 16S ribosomal RNA. The sequence is that of Small ribosomal subunit protein bS6 from Helicobacter pylori (strain G27).